Consider the following 62-residue polypeptide: uncharacterized protein (62 aa).

The tract at residues 1 to 26 (MGELAASANHGHSPCYPERKGTPGDL) is disordered. The span at 17-26 (PERKGTPGDL) shows a compositional bias: basic and acidic residues.

This is an uncharacterized protein from Homo sapiens (Human).